The following is a 91-amino-acid chain: Small ribosomal subunit protein uS19 (91 aa).

This sequence belongs to the universal ribosomal protein uS19 family.

Protein S19 forms a complex with S13 that binds strongly to the 16S ribosomal RNA. This is Small ribosomal subunit protein uS19 from Janthinobacterium sp. (strain Marseille) (Minibacterium massiliensis).